A 340-amino-acid polypeptide reads, in one-letter code: Agmatinase, mitochondrial (340 aa).

Residues H150, D173, H175, D177, D264, and D266 each contribute to the Mn(2+) site.

Belongs to the arginase family. Agmatinase subfamily. It depends on Mn(2+) as a cofactor.

It localises to the mitochondrion. The enzyme catalyses agmatine + H2O = urea + putrescine. Its pathway is amine and polyamine biosynthesis; putrescine biosynthesis via agmatine pathway; putrescine from agmatine: step 1/1. The protein is Agmatinase, mitochondrial (AGMAT) of Gallus gallus (Chicken).